A 329-amino-acid polypeptide reads, in one-letter code: Adenylate isopentenyltransferase (329 aa).

ATP contacts are provided by residues 37–44, Lys-63, Thr-74, 129–131, 220–222, and Lys-313; these read GATGTGKS, SNS, and KAI.

The protein belongs to the IPP transferase family. The cofactor is Mg(2+). As to expression, expressed in roots, stems, leaves and cones.

The enzyme catalyses dimethylallyl diphosphate + AMP = N(6)-(dimethylallyl)adenosine 5'-phosphate + diphosphate. The catalysed reaction is dimethylallyl diphosphate + ADP = N(6)-(dimethylallyl)adenosine 5'-diphosphate + diphosphate. It catalyses the reaction dimethylallyl diphosphate + ATP = N(6)-(dimethylallyl)adenosine 5'-triphosphate + diphosphate. Involved in cytokinin biosynthesis. Catalyzes the transfer of an isopentenyl group from dimethylallyl diphosphate (DMAPP) to ATP, ADP and AMP. GMP, IMP, CMP or UMP are not used as substrates. This chain is Adenylate isopentenyltransferase, found in Humulus lupulus (European hop).